A 340-amino-acid chain; its full sequence is tRNA N6-adenosine threonylcarbamoyltransferase (340 aa).

2 residues coordinate Fe cation: H113 and H117. Residues 135–139, D169, G182, D186, and N274 each bind substrate; that span reads LVSGG. D302 is a binding site for Fe cation.

It belongs to the KAE1 / TsaD family. The cofactor is Fe(2+).

The protein localises to the cytoplasm. It carries out the reaction L-threonylcarbamoyladenylate + adenosine(37) in tRNA = N(6)-L-threonylcarbamoyladenosine(37) in tRNA + AMP + H(+). Its function is as follows. Required for the formation of a threonylcarbamoyl group on adenosine at position 37 (t(6)A37) in tRNAs that read codons beginning with adenine. Is involved in the transfer of the threonylcarbamoyl moiety of threonylcarbamoyl-AMP (TC-AMP) to the N6 group of A37, together with TsaE and TsaB. TsaD likely plays a direct catalytic role in this reaction. The protein is tRNA N6-adenosine threonylcarbamoyltransferase of Mycolicibacterium smegmatis (strain ATCC 700084 / mc(2)155) (Mycobacterium smegmatis).